Consider the following 481-residue polypeptide: 7-deoxyloganetin glucosyltransferase (481 aa).

Catalysis depends on His22, which acts as the Proton acceptor. His22 contributes to the an anthocyanidin binding site. Asp126 serves as the catalytic Charge relay. UDP-alpha-D-glucose is bound by residues Thr148, Gln363, His378, Trp381, Asn382, Ser383, and Glu386. Ala401 lines the an anthocyanidin pocket. The UDP-alpha-D-glucose site is built by Glu402 and Gln403.

This sequence belongs to the UDP-glycosyltransferase family. Ubiquitous. Very low expression in stems.

It catalyses the reaction 7-deoxyloganetin + UDP-alpha-D-glucose = 7-deoxyloganin + UDP + H(+). Its function is as follows. Iridoid glucosyltransferase acting on genipin and 7-deoxyloganetin. No activity with 7-deoxyloganetic acid. Involved in geniposide biosynthesis. This chain is 7-deoxyloganetin glucosyltransferase (UGT85A24), found in Gardenia jasminoides (Cape jasmine).